We begin with the raw amino-acid sequence, 114 residues long: Class I hydrophobin 1 (114 aa).

An N-terminal signal peptide occupies residues 1–20 (MQFTKMSAFATLALATLAAA). 4 cysteine pairs are disulfide-bonded: cysteine 33–cysteine 93, cysteine 40–cysteine 87, cysteine 41–cysteine 74, and cysteine 94–cysteine 107.

Belongs to the fungal hydrophobin family. As to quaternary structure, self-assembles to form functional amyloid fibrils called rodlets. Self-assembly into fibrillar rodlets occurs spontaneously at hydrophobic:hydrophilic interfaces and the rodlets further associate laterally to form amphipathic monolayers.

It is found in the secreted. It localises to the cell wall. Functionally, aerial growth, conidiation, and dispersal of filamentous fungi in the environment rely upon a capability of their secreting small amphipathic proteins called hydrophobins (HPBs) with low sequence identity. Class I can self-assemble into an outermost layer of rodlet bundles on aerial cell surfaces, conferring cellular hydrophobicity that supports fungal growth, development and dispersal; whereas Class II form highly ordered films at water-air interfaces through intermolecular interactions but contribute nothing to the rodlet structure. Pnh1 is a class I hydrophobin that might be involved in the attachment of the hydrophilic wall of hyphae to the hydrophobic surface of wood under inorganic phosphate (Pi)-deficient conditions and enable the mycelium to degrade efficiently the components of wood and to acquire nutrients containing Pi. The sequence is that of Class I hydrophobin 1 from Pholiota nameko.